The sequence spans 364 residues: uncharacterized protein (364 aa).

Transmembrane regions (helical) follow at residues 41–61, 298–318, and 329–349; these read NIFT…FFGL, VIYI…ITYM, and LLFY…SIII.

Its subcellular location is the membrane. This is an uncharacterized protein from Mycoplasma capricolum subsp. capricolum (strain California kid / ATCC 27343 / NCTC 10154).